The following is a 193-amino-acid chain: dCTP deaminase (193 aa).

Residues 110–115, Asp128, 136–138, Tyr171, Lys178, and Gln182 contribute to the dCTP site; these read RSSLAR and VLE. Glu138 functions as the Proton donor/acceptor in the catalytic mechanism. The interval 169-193 is disordered; the sequence is RPYNRRQDAKYRDQQGAVASRIDKD.

The protein belongs to the dCTP deaminase family. Homotrimer.

The enzyme catalyses dCTP + H2O + H(+) = dUTP + NH4(+). It participates in pyrimidine metabolism; dUMP biosynthesis; dUMP from dCTP (dUTP route): step 1/2. In terms of biological role, catalyzes the deamination of dCTP to dUTP. The protein is dCTP deaminase of Cronobacter sakazakii (strain ATCC BAA-894) (Enterobacter sakazakii).